Here is a 388-residue protein sequence, read N- to C-terminus: Glucose-6-phosphate/phosphate translocator 2, chloroplastic (388 aa).

The N-terminal 68 residues, 1 to 68, are a transit peptide targeting the chloroplast; that stretch reads MLSSIKPSSS…SASNFKREVK (68 aa). 8 helical membrane passes run 95-115, 122-142, 158-178, 211-231, 233-253, 281-301, 305-325, and 358-378; these read LKIGIYFATWWALNVVFNIYN, FPYPWLTSTLSLACGSLMMLV, FWKTLFPVAVAHTIGHVAATV, FPLPVYLSLLPIIGGCALAAI, ELNFNITGFMGAMISNLAFVF, LVILTPFSIAVEGPQMWAAGW, VSQVGPNFVWWVVAQSVFYHL, and IIIFHTPIQPVNALGAAIAIF. The 119-residue stretch at 113–231 folds into the EamA domain; sequence IYNKKVLNAF…IIGGCALAAI (119 aa).

It belongs to the TPT transporter family. GPT (TC 2.A.7.9) subfamily. As to expression, expressed in seeds, flowers, stamens, and rosette leaves, with highest levels found in sepals and senescing leaves.

Its subcellular location is the plastid. It localises to the chloroplast membrane. Functionally, glucose 6-phosphate (Glc6P) transporter. Also transports inorganic phosphate, 3-phosphoglycerate, triose phosphates and, to a leser extent, phosphoenolpyruvate. Responsible for the transport of Glc6P into plastids of heterotrophic tissues where it can be used as a carbon source for starch biosynthesis, as substrate for fatty acid biosynthesis or as substrate for NADPH generation via the oxidative pentose phosphate pathway (OPPP). Required for dynamic acclimation of photosynthesis and partitioning of Glc6P between the chloroplast and the cytosol. May modulate the sensing of sugar status during early seedling development. The protein is Glucose-6-phosphate/phosphate translocator 2, chloroplastic of Arabidopsis thaliana (Mouse-ear cress).